The primary structure comprises 160 residues: Phosphopantetheine adenylyltransferase (160 aa).

Serine 11 serves as a coordination point for substrate. ATP contacts are provided by residues 11–12 (SF) and histidine 19. Lysine 43, leucine 75, and arginine 89 together coordinate substrate. Residues 90–92 (GLR), glutamate 100, and 125–131 (YSFISSS) contribute to the ATP site.

This sequence belongs to the bacterial CoaD family. In terms of assembly, homohexamer. Mg(2+) serves as cofactor.

The protein resides in the cytoplasm. The catalysed reaction is (R)-4'-phosphopantetheine + ATP + H(+) = 3'-dephospho-CoA + diphosphate. It functions in the pathway cofactor biosynthesis; coenzyme A biosynthesis; CoA from (R)-pantothenate: step 4/5. In terms of biological role, reversibly transfers an adenylyl group from ATP to 4'-phosphopantetheine, yielding dephospho-CoA (dPCoA) and pyrophosphate. In Staphylococcus aureus (strain Mu3 / ATCC 700698), this protein is Phosphopantetheine adenylyltransferase.